The chain runs to 185 residues: Elongation factor P 1 (185 aa).

It belongs to the elongation factor P family.

The protein localises to the cytoplasm. It functions in the pathway protein biosynthesis; polypeptide chain elongation. Its function is as follows. Involved in peptide bond synthesis. Stimulates efficient translation and peptide-bond synthesis on native or reconstituted 70S ribosomes in vitro. Probably functions indirectly by altering the affinity of the ribosome for aminoacyl-tRNA, thus increasing their reactivity as acceptors for peptidyl transferase. The protein is Elongation factor P 1 (efp1) of Chlamydia muridarum (strain MoPn / Nigg).